We begin with the raw amino-acid sequence, 71 residues long: General transcription and DNA repair factor IIH subunit TFB5 (71 aa).

This sequence belongs to the TFB5 family. As to quaternary structure, component of the 7-subunit TFIIH core complex composed of XPB, XPD, TFB1/GTF2H1, GTF2H2/P44, TFB4/GTF2H3, TFB2/GTF2H4 and TFB5/GTF2H5, which is active in NER. The core complex associates with the 3-subunit CDK-activating kinase (CAK) module composed of CYCH1/cyclin H1, CDKD and MAT1/At4g30820 to form the 10-subunit holoenzyme (holo-TFIIH) active in transcription.

The protein localises to the nucleus. Its function is as follows. Component of the general transcription and DNA repair factor IIH (TFIIH) core complex, which is involved in general and transcription-coupled nucleotide excision repair (NER) of damaged DNA and, when complexed to CAK, in RNA transcription by RNA polymerase II. In NER, TFIIH acts by opening DNA around the lesion to allow the excision of the damaged oligonucleotide and its replacement by a new DNA fragment. In transcription, TFIIH has an essential role in transcription initiation. When the pre-initiation complex (PIC) has been established, TFIIH is required for promoter opening and promoter escape. Phosphorylation of the C-terminal tail (CTD) of the largest subunit of RNA polymerase II by the kinase module CAK controls the initiation of transcription. This chain is General transcription and DNA repair factor IIH subunit TFB5, found in Arabidopsis thaliana (Mouse-ear cress).